Consider the following 380-residue polypeptide: Glutamate 5-kinase (380 aa).

Lysine 20 is an ATP binding site. 3 residues coordinate substrate: serine 59, aspartate 146, and asparagine 158. Threonine 220–lysine 226 contributes to the ATP binding site. The PUA domain maps to serine 285–alanine 363.

It belongs to the glutamate 5-kinase family.

Its subcellular location is the cytoplasm. It catalyses the reaction L-glutamate + ATP = L-glutamyl 5-phosphate + ADP. The protein operates within amino-acid biosynthesis; L-proline biosynthesis; L-glutamate 5-semialdehyde from L-glutamate: step 1/2. Its function is as follows. Catalyzes the transfer of a phosphate group to glutamate to form L-glutamate 5-phosphate. The sequence is that of Glutamate 5-kinase from Nitratidesulfovibrio vulgaris (strain ATCC 29579 / DSM 644 / CCUG 34227 / NCIMB 8303 / VKM B-1760 / Hildenborough) (Desulfovibrio vulgaris).